The chain runs to 142 residues: UPF0179 protein PH1477 (142 aa).

This sequence belongs to the UPF0179 family.

This chain is UPF0179 protein PH1477, found in Pyrococcus horikoshii (strain ATCC 700860 / DSM 12428 / JCM 9974 / NBRC 100139 / OT-3).